Here is a 912-residue protein sequence, read N- to C-terminus: MPAMPSSGPGDTSSSAAEREEDRKDGEEQEEPRGKEERQEPSTTARKVGRPGRKRKHPPVESGDTPKDPAVISKSPSMAQDSGASELLPNGDLEKRSEPQPEEGSPAGGQKGGAPAEGEGAAETLPEASRAVENGCCTPKEGRGAPAEAGKEQKETNIESMKMEGSRGRLRGGLGWESSLRQRPMPRLTFQAGDPYYISKRKRDEWLARWKREAEKKAKVIAGMNAVEENQGPGESQKVEEASPPAVQQPTDPASPTVATTPEPVGSDAGDKNATKAGDDEPEYEDGRGFGIGELVWGKLRGFSWWPGRIVSWWMTGRSRAAEGTRWVMWFGDGKFSVVCVEKLMPLSSFCSAFHQATYNKQPMYRKAIYEVLQVASSRAGKLFPVCHDSDESDTAKAVEVQNKPMIEWALGGFQPSGPKGLEPPEEEKNPYKEVYTDMWVEPEAAAYAPPPPAKKPRKSTAEKPKVKEIIDERTRERLVYEVRQKCRNIEDICISCGSLNVTLEHPLFVGGMCQNCKNCFLECAYQYDDDGYQSYCTICCGGREVLMCGNNNCCRCFCVECVDLLVGPGAAQAAIKEDPWNCYMCGHKGTYGLLRRREDWPSRLQMFFANNHDQEFDPPKVYPPVPAEKRKPIRVLSLFDGIATGLLVLKDLGIQVDRYIASEVCEDSITVGMVRHQGKIMYVGDVRSVTQKHIQEWGPFDLVIGGSPCNDLSIVNPARKGLYEGTGRLFFEFYRLLHDARPKEGDDRPFFWLFENVVAMGVSDKRDISRFLESNPVMIDAKEVSAAHRARYFWGNLPGMNRPLASTVNDKLELQECLEHGRIAKFSKVRTITTRSNSIKQGKDQHFPVFMNEKEDILWCTEMERVFGFPVHYTDVSNMSRLARQRLLGRSWSVPVIRHLFAPLKEYFACV.

Disordered stretches follow at residues 1–178 and 221–286; these read MPAM…GWES and IAGM…EYED. Positions 17 to 40 are enriched in basic and acidic residues; it reads AEREEDRKDGEEQEEPRGKEERQE. A compositionally biased stretch (basic residues) spans 47-57; the sequence is KVGRPGRKRKH. Residues 74-83 are compositionally biased toward polar residues; it reads KSPSMAQDSG. The residue at position 105 (serine 105) is a Phosphoserine. Over residues 113 to 128 the composition is skewed to low complexity; that stretch reads GAPAEGEGAAETLPEA. Threonine 124 carries the phosphothreonine modification. Residues 149-167 show a composition bias toward basic and acidic residues; it reads AGKEQKETNIESMKMEGSR. Lysine 162 participates in a covalent cross-link: Glycyl lysine isopeptide (Lys-Gly) (interchain with G-Cter in SUMO2). Arginine 171 carries the post-translational modification Omega-N-methylarginine. The interval 199–403 is interaction with DNMT1 and DNMT3B; sequence SKRKRDEWLA…DTAKAVEVQN (205 aa). Phosphoserine occurs at positions 243 and 255. Residues 246-260 are compositionally biased toward polar residues; that stretch reads AVQQPTDPASPTVAT. The residue at position 261 (threonine 261) is a Phosphothreonine. Serine 267 is subject to Phosphoserine. The segment covering 269-279 has biased composition (basic and acidic residues); the sequence is AGDKNATKAGD. In terms of domain architecture, PWWP spans 292–350; that stretch reads IGELVWGKLRGFSWWPGRIVSWWMTGRSRAAEGTRWVMWFGDGKFSVVCVEKLMPLSSF. Residues serine 390 and serine 393 each carry the phosphoserine modification. The disordered stretch occupies residues 447–466; the sequence is AYAPPPPAKKPRKSTAEKPK. The ADD domain occupies 482-614; that stretch reads EVRQKCRNIE…LQMFFANNHD (133 aa). The segment at 493-523 adopts a GATA-type; atypical zinc-finger fold; the sequence is ICISCGSLNVTLEHPLFVGGMCQNCKNCFLE. The interval 494–586 is interaction with the PRC2/EED-EZH2 complex; it reads CISCGSLNVT…KEDPWNCYMC (93 aa). The PHD-type; atypical zinc-finger motif lies at 534–590; the sequence is QSYCTICCGGREVLMCGNNNCCRCFCVECVDLLVGPGAAQAAIKEDPWNCYMCGHKG. Residues 634 to 912 enclose the SAM-dependent MTase C5-type domain; it reads IRVLSLFDGI…APLKEYFACV (279 aa). S-adenosyl-L-methionine contacts are provided by residues 641-645, glutamate 664, and 686-688; these read DGIAT and DVR. The active site involves cysteine 710. Cysteine 710 is modified (S-methylcysteine; by autocatalysis). 891-893 contributes to the S-adenosyl-L-methionine binding site; the sequence is RSW.

Belongs to the class I-like SAM-binding methyltransferase superfamily. C5-methyltransferase family. Heterotetramer composed of 1 DNMT3A homodimer and 2 DNMT3L subunits (DNMT3L-DNMT3A-DNMT3A-DNMT3L). Interacts with UBC9, PIAS1 and PIAS2. Binds the ZBTB18 transcriptional repressor. Interacts with SETDB1. Associates with HDAC1 through its ADD domain. Interacts with UHRF1. Interacts with DNMT1 and DNMT3B. Interacts with the PRC2/EED-EZH2 complex. Interacts with MPHOSPH8. Interacts with histone H3 that is not methylated at 'Lys-4' (H3K4). Interacts with SPOCD1. Interacts with ZNF263; recruited to the SIX3 promoter along with other proteins involved in chromatin modification and transcriptional corepression where it contributes to transcriptional repression. Post-translationally, sumoylated; sumoylation disrupts the ability to interact with histone deacetylases (HDAC1 and HDAC2) and repress transcription. Auto-methylated at Cys-710: auto-methylation takes place in absence of DNA substrate and inactivates the DNA methyltransferase activity. Inactivation by auto-methylation may be used to inactivate unused DNA methyltransferases in the cell. Highly expressed in fetal tissues, skeletal muscle, heart, peripheral blood mononuclear cells, kidney, and at lower levels in placenta, brain, liver, colon, spleen, small intestine and lung.

The protein resides in the nucleus. It is found in the chromosome. The protein localises to the cytoplasm. The catalysed reaction is a 2'-deoxycytidine in DNA + S-adenosyl-L-methionine = a 5-methyl-2'-deoxycytidine in DNA + S-adenosyl-L-homocysteine + H(+). The enzyme catalyses L-cysteinyl-[protein] + S-adenosyl-L-methionine = S-methyl-L-cysteinyl-[protein] + S-adenosyl-L-homocysteine + H(+). Activated by binding to the regulatory factor DNMT3L. Auto-methylation at Cys-710 in absence of DNA inactivates the DNA methyltransferase activity. In terms of biological role, required for genome-wide de novo methylation and is essential for the establishment of DNA methylation patterns during development. DNA methylation is coordinated with methylation of histones. It modifies DNA in a non-processive manner and also methylates non-CpG sites. May preferentially methylate DNA linker between 2 nucleosomal cores and is inhibited by histone H1. Plays a role in paternal and maternal imprinting. Required for methylation of most imprinted loci in germ cells. Acts as a transcriptional corepressor for ZBTB18. Recruited to trimethylated 'Lys-36' of histone H3 (H3K36me3) sites. Can actively repress transcription through the recruitment of HDAC activity. Also has weak auto-methylation activity on Cys-710 in absence of DNA. The chain is DNA (cytosine-5)-methyltransferase 3A (DNMT3A) from Homo sapiens (Human).